The primary structure comprises 136 residues: Histone H3.1t (136 aa).

Positions Met-1–Arg-43 are disordered. Arg-3 is modified (asymmetric dimethylarginine; by PRMT6; alternate). Position 3 is a citrulline; alternate (Arg-3). Thr-4 is subject to Phosphothreonine; by HASPIN. Lys-5 is subject to Allysine; alternate. At Lys-5 the chain carries N6,N6,N6-trimethyllysine; alternate. Lys-5 is subject to N6,N6-dimethyllysine; alternate. Position 5 is an N6-(2-hydroxyisobutyryl)lysine; alternate (Lys-5). Position 5 is an N6-(beta-hydroxybutyryl)lysine; alternate (Lys-5). An N6-acetyllysine; alternate modification is found at Lys-5. Lys-5 bears the N6-methyllysine; alternate mark. A 5-glutamyl dopamine; alternate modification is found at Gln-6. At Gln-6 the chain carries 5-glutamyl serotonin; alternate. Thr-7 carries the phosphothreonine; by PKC modification. Arg-9 carries the post-translational modification Citrulline; alternate. Residue Arg-9 is modified to Symmetric dimethylarginine; by PRMT5; alternate. At Lys-10 the chain carries N6,N6,N6-trimethyllysine; alternate. An N6,N6-dimethyllysine; alternate modification is found at Lys-10. Residue Lys-10 is modified to N6-(2-hydroxyisobutyryl)lysine; alternate. Lys-10 carries the post-translational modification N6-(beta-hydroxybutyryl)lysine; alternate. Residue Lys-10 is modified to N6-acetyllysine; alternate. Lys-10 bears the N6-methyllysine; alternate mark. Residue Lys-10 is modified to N6-lactoyllysine; alternate. Position 11 is an ADP-ribosylserine; alternate (Ser-11). At Ser-11 the chain carries Phosphoserine; alternate; by AURKB, AURKC, RPS6KA3, RPS6KA4 and RPS6KA5. At Thr-12 the chain carries Phosphothreonine; by PKC. Position 15 is an N6-(2-hydroxyisobutyryl)lysine; alternate (Lys-15). N6-(beta-hydroxybutyryl)lysine; alternate is present on Lys-15. Lys-15 is subject to N6-acetyllysine; alternate. Lys-15 is subject to N6-lactoyllysine; alternate. The residue at position 15 (Lys-15) is an N6-glutaryllysine; alternate. Lys-15 is subject to N6-succinyllysine; alternate. Arg-18 carries the post-translational modification Citrulline; alternate. Arg-18 carries the post-translational modification Asymmetric dimethylarginine; by CARM1; alternate. N6-(2-hydroxyisobutyryl)lysine; alternate occurs at positions 19 and 24. N6-(beta-hydroxybutyryl)lysine; alternate is present on residues Lys-19 and Lys-24. 2 positions are modified to N6-acetyllysine; alternate: Lys-19 and Lys-24. 2 positions are modified to N6-methyllysine; alternate: Lys-19 and Lys-24. An N6-lactoyllysine; alternate mark is found at Lys-19 and Lys-24. N6-glutaryllysine; alternate is present on residues Lys-19 and Lys-24. Lys-19 and Lys-24 each carry N6-butyryllysine; alternate. Citrulline is present on Arg-27. Lys-28 is modified (N6,N6,N6-trimethyllysine; alternate). Lys-28 is modified (N6,N6-dimethyllysine; alternate). At Lys-28 the chain carries N6-(2-hydroxyisobutyryl)lysine; alternate. Lys-28 is modified (N6-acetyllysine; alternate). Lys-28 is subject to N6-methyllysine; alternate. The residue at position 28 (Lys-28) is an N6-lactoyllysine; alternate. Residue Lys-28 is modified to N6-glutaryllysine; alternate. Residue Ser-29 is modified to ADP-ribosylserine; alternate. Ser-29 carries the post-translational modification Phosphoserine; alternate; by AURKB, AURKC and RPS6KA5. Lys-37 carries the N6,N6,N6-trimethyllysine; alternate modification. N6,N6-dimethyllysine; alternate is present on Lys-37. Lys-37 bears the N6-(2-hydroxyisobutyryl)lysine; alternate mark. Lys-37 is subject to N6-acetyllysine; alternate. Position 37 is an N6-methyllysine; alternate (Lys-37). Lys-38 is subject to N6-methyllysine. Tyr-42 is subject to Phosphotyrosine. An N6,N6,N6-trimethyllysine; alternate modification is found at Lys-57. Lys-57 carries the post-translational modification N6-(2-hydroxyisobutyryl)lysine; alternate. Residue Lys-57 is modified to N6-(beta-hydroxybutyryl)lysine; alternate. Lys-57 carries the post-translational modification N6-acetyllysine; alternate. Lys-57 is subject to N6-lactoyllysine; alternate. Lys-57 is subject to N6-glutaryllysine; alternate. Lys-57 is modified (N6-succinyllysine; alternate). Position 57 is an N6-methyllysine; by EHMT2; alternate (Lys-57). Position 58 is a phosphoserine (Ser-58). Residues Lys-65 and Lys-80 each carry the N6-(2-hydroxyisobutyryl)lysine; alternate modification. Lys-65 and Lys-80 each carry N6-methyllysine; alternate. Lys-80 is modified (N6,N6,N6-trimethyllysine; alternate). Residue Lys-80 is modified to N6,N6-dimethyllysine; alternate. At Lys-80 the chain carries N6-acetyllysine; alternate. Lys-80 carries the N6-lactoyllysine; alternate modification. Lys-80 is modified (N6-glutaryllysine; alternate). Lys-80 bears the N6-succinyllysine; alternate mark. Thr-81 is subject to Phosphothreonine. Residue Ser-87 is modified to Phosphoserine. Thr-108 is modified (phosphothreonine). Residues Lys-116 and Lys-123 each carry the N6-acetyllysine; alternate modification. An N6-glutaryllysine; alternate mark is found at Lys-116 and Lys-123. Residue Lys-123 is modified to N6-(2-hydroxyisobutyryl)lysine; alternate. Lys-123 is subject to N6-methyllysine; alternate. Residue Lys-123 is modified to N6-succinyllysine; alternate.

Belongs to the histone H3 family. As to quaternary structure, the nucleosome is a histone octamer containing two molecules each of H2A, H2B, H3 and H4 assembled in one H3-H4 heterotetramer and two H2A-H2B heterodimers. The octamer wraps approximately 147 bp of DNA. Interacts with TONSL; CHAF1A and CHAF1B. In terms of processing, acetylation is generally linked to gene activation. Acetylation on Lys-10 (H3K9ac) impairs methylation at Arg-9 (H3R8me2s). Acetylation on Lys-19 (H3K18ac) and Lys-24 (H3K24ac) favors methylation at Arg-18 (H3R17me). Acetylation at Lys-123 (H3K122ac) by EP300/p300 plays a central role in chromatin structure: localizes at the surface of the histone octamer and stimulates transcription, possibly by promoting nucleosome instability. Post-translationally, citrullination at Arg-9 (H3R8ci) and/or Arg-18 (H3R17ci) by PADI4 impairs methylation and represses transcription. Asymmetric dimethylation at Arg-18 (H3R17me2a) by CARM1 is linked to gene activation. Symmetric dimethylation at Arg-9 (H3R8me2s) by PRMT5 is linked to gene repression. Asymmetric dimethylation at Arg-3 (H3R2me2a) by PRMT6 is linked to gene repression and is mutually exclusive with H3 Lys-5 methylation (H3K4me2 and H3K4me3). H3R2me2a is present at the 3' of genes regardless of their transcription state and is enriched on inactive promoters, while it is absent on active promoters. In terms of processing, methylation at Lys-5 (H3K4me), Lys-37 (H3K36me) and Lys-80 (H3K79me) are linked to gene activation. Methylation at Lys-5 (H3K4me) facilitates subsequent acetylation of H3 and H4. Methylation at Lys-80 (H3K79me) is associated with DNA double-strand break (DSB) responses and is a specific target for TP53BP1. Methylation at Lys-10 (H3K9me) and Lys-28 (H3K27me) are linked to gene repression. Methylation at Lys-10 (H3K9me) is a specific target for HP1 proteins (CBX1, CBX3 and CBX5) and prevents subsequent phosphorylation at Ser-11 (H3S10ph) and acetylation of H3 and H4. Methylation at Lys-5 (H3K4me) and Lys-80 (H3K79me) require preliminary monoubiquitination of H2B at 'Lys-120'. Methylation at Lys-10 (H3K9me) and Lys-28 (H3K27me) are enriched in inactive X chromosome chromatin. Monomethylation at Lys-57 (H3K56me1) by EHMT2/G9A in G1 phase promotes interaction with PCNA and is required for DNA replication. Post-translationally, phosphorylated at Thr-4 (H3T3ph) by HASPIN during prophase and dephosphorylated during anaphase. Phosphorylation at Ser-11 (H3S10ph) by AURKB is crucial for chromosome condensation and cell-cycle progression during mitosis and meiosis. In addition phosphorylation at Ser-11 (H3S10ph) by RPS6KA4 and RPS6KA5 is important during interphase because it enables the transcription of genes following external stimulation, like mitogens, stress, growth factors or UV irradiation and result in the activation of genes, such as c-fos and c-jun. Phosphorylation at Ser-11 (H3S10ph), which is linked to gene activation, prevents methylation at Lys-10 (H3K9me) but facilitates acetylation of H3 and H4. Phosphorylation at Ser-11 (H3S10ph) by AURKB mediates the dissociation of HP1 proteins (CBX1, CBX3 and CBX5) from heterochromatin. Phosphorylation at Ser-11 (H3S10ph) is also an essential regulatory mechanism for neoplastic cell transformation. Phosphorylated at Ser-29 (H3S28ph) by MAP3K20 isoform 1, RPS6KA5 or AURKB during mitosis or upon ultraviolet B irradiation. Phosphorylation at Thr-7 (H3T6ph) by PRKCB is a specific tag for epigenetic transcriptional activation that prevents demethylation of Lys-5 (H3K4me) by LSD1/KDM1A. At centromeres, specifically phosphorylated at Thr-12 (H3T11ph) from prophase to early anaphase, by DAPK3 and PKN1. Phosphorylation at Thr-12 (H3T11ph) by PKN1 or isoform M2 of PKM (PKM2) is a specific tag for epigenetic transcriptional activation that promotes demethylation of Lys-10 (H3K9me) by KDM4C/JMJD2C. Phosphorylation at Tyr-42 (H3Y41ph) by JAK2 promotes exclusion of CBX5 (HP1 alpha) from chromatin. Ubiquitinated. In terms of processing, lysine deamination at Lys-5 (H3K4all) to form allysine is mediated by LOXL2. Allysine formation by LOXL2 only takes place on H3K4me3 and results in gene repression. Post-translationally, butyrylation of histones marks active promoters and competes with histone acetylation. It is present during late spermatogenesis. Succinylation at Lys-80 (H3K79succ) by KAT2A takes place with a maximum frequency around the transcription start sites of genes. It gives a specific tag for epigenetic transcription activation. Desuccinylation at Lys-123 (H3K122succ) by SIRT7 in response to DNA damage promotes chromatin condensation and double-strand breaks (DSBs) repair. In terms of processing, serine ADP-ribosylation constitutes the primary form of ADP-ribosylation of proteins in response to DNA damage. Serine ADP-ribosylation at Ser-11 (H3S10ADPr) is mutually exclusive with phosphorylation at Ser-11 (H3S10ph) and impairs acetylation at Lys-10 (H3K9ac). In terms of tissue distribution, expressed in testicular cells.

Its subcellular location is the nucleus. It is found in the chromosome. Functionally, core component of nucleosome. Nucleosomes wrap and compact DNA into chromatin, limiting DNA accessibility to the cellular machineries which require DNA as a template. Histones thereby play a central role in transcription regulation, DNA repair, DNA replication and chromosomal stability. DNA accessibility is regulated via a complex set of post-translational modifications of histones, also called histone code, and nucleosome remodeling. This Homo sapiens (Human) protein is Histone H3.1t.